Here is a 413-residue protein sequence, read N- to C-terminus: Serine hydroxymethyltransferase (413 aa).

(6S)-5,6,7,8-tetrahydrofolate contacts are provided by residues leucine 115 and 119 to 121 (GHL). Lysine 224 is subject to N6-(pyridoxal phosphate)lysine.

It belongs to the SHMT family. In terms of assembly, homodimer. The cofactor is pyridoxal 5'-phosphate.

It localises to the cytoplasm. The enzyme catalyses (6R)-5,10-methylene-5,6,7,8-tetrahydrofolate + glycine + H2O = (6S)-5,6,7,8-tetrahydrofolate + L-serine. It participates in one-carbon metabolism; tetrahydrofolate interconversion. The protein operates within amino-acid biosynthesis; glycine biosynthesis; glycine from L-serine: step 1/1. Its function is as follows. Catalyzes the reversible interconversion of serine and glycine with tetrahydrofolate (THF) serving as the one-carbon carrier. This reaction serves as the major source of one-carbon groups required for the biosynthesis of purines, thymidylate, methionine, and other important biomolecules. Also exhibits THF-independent aldolase activity toward beta-hydroxyamino acids, producing glycine and aldehydes, via a retro-aldol mechanism. This Mycoplasma mycoides subsp. mycoides SC (strain CCUG 32753 / NCTC 10114 / PG1) protein is Serine hydroxymethyltransferase.